The primary structure comprises 189 residues: Crossover junction endodeoxyribonuclease RuvC (189 aa).

Active-site residues include Asp-11, Glu-71, and Asp-143. 3 residues coordinate Mg(2+): Asp-11, Glu-71, and Asp-143.

Belongs to the RuvC family. Homodimer which binds Holliday junction (HJ) DNA. The HJ becomes 2-fold symmetrical on binding to RuvC with unstacked arms; it has a different conformation from HJ DNA in complex with RuvA. In the full resolvosome a probable DNA-RuvA(4)-RuvB(12)-RuvC(2) complex forms which resolves the HJ. Requires Mg(2+) as cofactor.

It localises to the cytoplasm. It catalyses the reaction Endonucleolytic cleavage at a junction such as a reciprocal single-stranded crossover between two homologous DNA duplexes (Holliday junction).. Its function is as follows. The RuvA-RuvB-RuvC complex processes Holliday junction (HJ) DNA during genetic recombination and DNA repair. Endonuclease that resolves HJ intermediates. Cleaves cruciform DNA by making single-stranded nicks across the HJ at symmetrical positions within the homologous arms, yielding a 5'-phosphate and a 3'-hydroxyl group; requires a central core of homology in the junction. The consensus cleavage sequence is 5'-(A/T)TT(C/G)-3'. Cleavage occurs on the 3'-side of the TT dinucleotide at the point of strand exchange. HJ branch migration catalyzed by RuvA-RuvB allows RuvC to scan DNA until it finds its consensus sequence, where it cleaves and resolves the cruciform DNA. This Methylorubrum populi (strain ATCC BAA-705 / NCIMB 13946 / BJ001) (Methylobacterium populi) protein is Crossover junction endodeoxyribonuclease RuvC.